We begin with the raw amino-acid sequence, 669 residues long: DNA ligase (669 aa).

NAD(+)-binding positions include 32–36, 81–82, and Glu113; these read DAEYD and SL. Residue Lys115 is the N6-AMP-lysine intermediate of the active site. NAD(+) contacts are provided by Arg136, Glu173, Lys290, and Lys314. Zn(2+)-binding residues include Cys408, Cys411, Cys426, and Cys432. Residues 592–669 form the BRCT domain; the sequence is AVDSALAGKI…DEQALIEFLK (78 aa).

Belongs to the NAD-dependent DNA ligase family. LigA subfamily. The cofactor is Mg(2+). Mn(2+) is required as a cofactor.

The catalysed reaction is NAD(+) + (deoxyribonucleotide)n-3'-hydroxyl + 5'-phospho-(deoxyribonucleotide)m = (deoxyribonucleotide)n+m + AMP + beta-nicotinamide D-nucleotide.. DNA ligase that catalyzes the formation of phosphodiester linkages between 5'-phosphoryl and 3'-hydroxyl groups in double-stranded DNA using NAD as a coenzyme and as the energy source for the reaction. It is essential for DNA replication and repair of damaged DNA. This chain is DNA ligase, found in Vibrio cholerae serotype O1 (strain ATCC 39315 / El Tor Inaba N16961).